Here is a 587-residue protein sequence, read N- to C-terminus: Kelch-like ECH-associated protein 1B (587 aa).

One can recognise a BTB domain in the interval 44 to 117 (CDVTLRVRYC…AYTASISVGE (74 aa)). Residues 153–253 (IGIASFAEQI…LTPHFLQRQL (101 aa)) enclose the BACK domain. Kelch repeat units follow at residues 292-337 (LIYT…VISG), 338-388 (LLYA…VIDG), 389-435 (MIYA…VINR), 436-482 (LLYA…ALGN), 484-529 (IYVM…THHG), and 530-576 (RIYV…VTME).

It belongs to the KEAP1 family. In terms of assembly, homodimer and heterodimer; heterodimerizes with keap1a. Component of the BCR(KEAP1) E3 ubiquitin ligase complex, at least composed of 2 molecules of cul3, 2 molecules of keap1 (keap1a and/or keap1b), and rbx1. Interacts with nfe2l2/nrf2; the interaction is direct. In terms of processing, non-enzymatic covalent modifications of reactive cysteines by electrophile metabolites inactivate the BCR(KEAP1) complex. As to expression, widely expressed.

The protein resides in the cytoplasm. It localises to the nucleus. It functions in the pathway protein modification; protein ubiquitination. With respect to regulation, ubiquitin ligase activity of the BCR(KEAP1) complex is inhibited by oxidative stress and electrophile metabolites such as sulforaphane. Electrophile metabolites react with reactive cysteine residues in keap1 and trigger non-enzymatic covalent modifications of these cysteine residues, leading to inactivate the ubiquitin ligase activity of the BCR(KEAP1) complex. Substrate-specific adapter of a BCR (BTB-CUL3-RBX1) E3 ubiquitin ligase complex that regulates the response to oxidative stress by targeting nfe2l2/nrf2 for ubiquitination. Keap1 acts as a key sensor of oxidative and electrophilic stress: in normal conditions, the BCR(KEAP1) complex mediates ubiquitination and degradation of nfe2l2/nrf2, a transcription factor regulating expression of many cytoprotective genes. In response to oxidative stress, different electrophile metabolites trigger non-enzymatic covalent modifications of highly reactive cysteine residues in KEAP1, leading to inactivate the ubiquitin ligase activity of the BCR(KEAP1) complex, promoting nfe2l2/nrf2 nuclear accumulation and expression of phase II detoxifying enzymes. This chain is Kelch-like ECH-associated protein 1B, found in Danio rerio (Zebrafish).